The sequence spans 289 residues: ATP synthase gamma chain (289 aa).

It belongs to the ATPase gamma chain family. In terms of assembly, F-type ATPases have 2 components, CF(1) - the catalytic core - and CF(0) - the membrane proton channel. CF(1) has five subunits: alpha(3), beta(3), gamma(1), delta(1), epsilon(1). CF(0) has three main subunits: a, b and c.

It is found in the cell inner membrane. Functionally, produces ATP from ADP in the presence of a proton gradient across the membrane. The gamma chain is believed to be important in regulating ATPase activity and the flow of protons through the CF(0) complex. In Haemophilus influenzae (strain PittEE), this protein is ATP synthase gamma chain.